The sequence spans 264 residues: Thymidylate synthase (264 aa).

Position 21 (Arg21) interacts with dUMP. Residue His51 coordinates (6R)-5,10-methylene-5,6,7,8-tetrahydrofolate. Position 126-127 (126-127) interacts with dUMP; sequence RR. The active-site Nucleophile is Cys146. DUMP-binding positions include 166 to 169, Asn177, and 207 to 209; these read RSAD and HLY. Asp169 provides a ligand contact to (6R)-5,10-methylene-5,6,7,8-tetrahydrofolate. Ala263 contacts (6R)-5,10-methylene-5,6,7,8-tetrahydrofolate.

The protein belongs to the thymidylate synthase family. Bacterial-type ThyA subfamily. In terms of assembly, homodimer.

It localises to the cytoplasm. It catalyses the reaction dUMP + (6R)-5,10-methylene-5,6,7,8-tetrahydrofolate = 7,8-dihydrofolate + dTMP. It participates in pyrimidine metabolism; dTTP biosynthesis. Functionally, catalyzes the reductive methylation of 2'-deoxyuridine-5'-monophosphate (dUMP) to 2'-deoxythymidine-5'-monophosphate (dTMP) while utilizing 5,10-methylenetetrahydrofolate (mTHF) as the methyl donor and reductant in the reaction, yielding dihydrofolate (DHF) as a by-product. This enzymatic reaction provides an intracellular de novo source of dTMP, an essential precursor for DNA biosynthesis. In Cytophaga hutchinsonii (strain ATCC 33406 / DSM 1761 / CIP 103989 / NBRC 15051 / NCIMB 9469 / D465), this protein is Thymidylate synthase.